Here is a 212-residue protein sequence, read N- to C-terminus: WAP four-disulfide core domain protein 1 (212 aa).

A signal peptide spans 1–26 (MGSCDRKALWALSFLLLLLGSSSVQG). The segment at 43–62 (EEVAATGSRQPHADRCPPPP) is disordered. A WAP domain is found at 51–100 (RQPHADRCPPPPRTLPPGACQATRCQSDSECPRHRRCCYNGCAYACLEAV). Cystine bridges form between cysteine 58/cysteine 88, cysteine 70/cysteine 92, cysteine 75/cysteine 87, and cysteine 81/cysteine 96. Residues 191 to 212 (EYPEGDSKYVAEPGKGQQRHFP) are disordered.

As to expression, vascular smooth muscle and prostate. Periacinar ring.

Its subcellular location is the secreted. Functionally, has growth inhibitory activity. This is WAP four-disulfide core domain protein 1 (Wfdc1) from Rattus norvegicus (Rat).